The chain runs to 767 residues: Cilia- and flagella-associated protein 91 (767 aa).

The segment at 1 to 29 (MSHAVTIEEPQAQPQVSQTRYRERSRAGS) is disordered.

Belongs to the CFAP91 family. As to quaternary structure, interacts with MYCBP and AKAP1. Part of a complex containing MYCBP, AKAP1 and PRKAR2B. Interacts with CFAP61. Does not interact with MYCBP. Phosphorylated by PKA. In terms of tissue distribution, strongly expressed in the liver. As to expression, widely expressed, but strongly expressed in all spermatogenesis-related tissues, including the testis, the epithelium of cauda and the corpus epididymis, as well as the spermatid and mature sperm. Also expressed in Leydig cells.

Its subcellular location is the mitochondrion. It localises to the cytoplasm. It is found in the cytoskeleton. The protein localises to the cilium axoneme. Involved in sperm flagellum axonemal organization and function. May regulate cilium motility through its role in the assembly of the axonemal radial spokes. The polypeptide is Cilia- and flagella-associated protein 91 (Homo sapiens (Human)).